The following is a 377-amino-acid chain: Alanine racemase (377 aa).

The Proton acceptor; specific for D-alanine role is filled by Lys-37. An N6-(pyridoxal phosphate)lysine modification is found at Lys-37. Arg-135 serves as a coordination point for substrate. Tyr-271 (proton acceptor; specific for L-alanine) is an active-site residue. Met-319 is a binding site for substrate.

Belongs to the alanine racemase family. Requires pyridoxal 5'-phosphate as cofactor.

The enzyme catalyses L-alanine = D-alanine. It functions in the pathway amino-acid biosynthesis; D-alanine biosynthesis; D-alanine from L-alanine: step 1/1. Its function is as follows. Catalyzes the interconversion of L-alanine and D-alanine. May also act on other amino acids. The chain is Alanine racemase (alr) from Helicobacter pylori (strain P12).